A 273-amino-acid chain; its full sequence is 3-methyl-2-oxobutanoate hydroxymethyltransferase (273 aa).

2 residues coordinate Mg(2+): Asp-53 and Asp-92. 3-methyl-2-oxobutanoate contacts are provided by residues 53 to 54 (DS), Asp-92, and Lys-120. Residue Glu-122 coordinates Mg(2+). The Proton acceptor role is filled by Glu-189.

Belongs to the PanB family. As to quaternary structure, homodecamer; pentamer of dimers. Mg(2+) is required as a cofactor.

It is found in the cytoplasm. The catalysed reaction is 3-methyl-2-oxobutanoate + (6R)-5,10-methylene-5,6,7,8-tetrahydrofolate + H2O = 2-dehydropantoate + (6S)-5,6,7,8-tetrahydrofolate. It participates in cofactor biosynthesis; (R)-pantothenate biosynthesis; (R)-pantoate from 3-methyl-2-oxobutanoate: step 1/2. Functionally, catalyzes the reversible reaction in which hydroxymethyl group from 5,10-methylenetetrahydrofolate is transferred onto alpha-ketoisovalerate to form ketopantoate. This Cupriavidus pinatubonensis (strain JMP 134 / LMG 1197) (Cupriavidus necator (strain JMP 134)) protein is 3-methyl-2-oxobutanoate hydroxymethyltransferase.